A 489-amino-acid polypeptide reads, in one-letter code: Cytochrome P450 302a1, mitochondrial (489 aa).

C434 contributes to the heme binding site.

This sequence belongs to the cytochrome P450 family. Heme is required as a cofactor. Complex coexpression pattern of dib (disembodied) and sad (shade) in the early embryo that restricts to the prothoracic gland cells of the developing ring gland during late embryogenesis. In larvae and adult, coexpression is seen in prothoracic gland and follicle cells of the ovary. In adults, coexpression is seen in the follicle cells.

The protein localises to the mitochondrion membrane. It carries out the reaction 2,22-dideoxyecdysone + 2 reduced [adrenodoxin] + O2 + 2 H(+) = 2-deoxyecdysone + 2 oxidized [adrenodoxin] + H2O. Its pathway is steroid biosynthesis; ecdysteroid biosynthesis. Functionally, required for CNS development; negatively regulates glial cell division in the embryonic midline. Involved in the metabolism of insect hormones; responsible for ecdysteroid C22-hydroxylase activity. May be involved in the breakdown of synthetic insecticides. This Drosophila melanogaster (Fruit fly) protein is Cytochrome P450 302a1, mitochondrial.